The primary structure comprises 249 residues: uncharacterized protein (249 aa).

It is found in the cytoplasm. The protein localises to the nucleus. This is an uncharacterized protein from Schizosaccharomyces pombe (strain 972 / ATCC 24843) (Fission yeast).